The chain runs to 407 residues: Argininosuccinate synthase (407 aa).

Residues 16–24 (AYSGGLDTS) and alanine 44 contribute to the ATP site. Residues tyrosine 96 and serine 101 each coordinate L-citrulline. Glycine 126 contributes to the ATP binding site. L-aspartate contacts are provided by threonine 128, asparagine 132, and aspartate 133. Asparagine 132 is a binding site for L-citrulline. Arginine 136, serine 185, serine 194, glutamate 270, and tyrosine 282 together coordinate L-citrulline.

The protein belongs to the argininosuccinate synthase family. Type 1 subfamily. In terms of assembly, homotetramer.

Its subcellular location is the cytoplasm. The catalysed reaction is L-citrulline + L-aspartate + ATP = 2-(N(omega)-L-arginino)succinate + AMP + diphosphate + H(+). The protein operates within amino-acid biosynthesis; L-arginine biosynthesis; L-arginine from L-ornithine and carbamoyl phosphate: step 2/3. The sequence is that of Argininosuccinate synthase from Shewanella putrefaciens (strain CN-32 / ATCC BAA-453).